A 364-amino-acid polypeptide reads, in one-letter code: Lipid-A-disaccharide synthase (364 aa).

Belongs to the LpxB family.

It catalyses the reaction a lipid X + a UDP-2-N,3-O-bis[(3R)-3-hydroxyacyl]-alpha-D-glucosamine = a lipid A disaccharide + UDP + H(+). It participates in bacterial outer membrane biogenesis; LPS lipid A biosynthesis. Functionally, condensation of UDP-2,3-diacylglucosamine and 2,3-diacylglucosamine-1-phosphate to form lipid A disaccharide, a precursor of lipid A, a phosphorylated glycolipid that anchors the lipopolysaccharide to the outer membrane of the cell. This chain is Lipid-A-disaccharide synthase, found in Campylobacter jejuni (strain RM1221).